A 229-amino-acid polypeptide reads, in one-letter code: MEFRSVAERICGDIVLSENSGEALRKWRSIFNASQSDLARKLGISPSVISDYESGRRKPGTAFLKKFVCALIELDGERGYQVLSKYRYFLESDHKAVLDIAEYQKTAEPSEFCEVIEGKMLTHFDKAIHGHTVIDSINAILSLNAFDFYRLYGLTSERALIFTRVSTGRSPMVAVRVSNLKPSAVVLHGLEAERVDEMAKKIAEIERIPLVVTEIAIGEIVKRLRRKFA.

The region spanning 24 to 78 is the HTH cro/C1-type domain; it reads LRKWRSIFNASQSDLARKLGISPSVISDYESGRRKPGTAFLKKFVCALIELDGER. The segment at residues 35–54 is a DNA-binding region (H-T-H motif); it reads QSDLARKLGISPSVISDYES.

This is an uncharacterized protein from Archaeoglobus fulgidus (strain ATCC 49558 / DSM 4304 / JCM 9628 / NBRC 100126 / VC-16).